The primary structure comprises 298 residues: Aspartate carbamoyltransferase catalytic subunit (298 aa).

Carbamoyl phosphate-binding residues include Arg53 and Thr54. Position 81 (Lys81) interacts with L-aspartate. Residues Arg103, His132, and Gln135 each contribute to the carbamoyl phosphate site. L-aspartate-binding residues include Arg166 and Arg218. 2 residues coordinate carbamoyl phosphate: Gly259 and Pro260.

It belongs to the aspartate/ornithine carbamoyltransferase superfamily. ATCase family. As to quaternary structure, heterododecamer (2C3:3R2) of six catalytic PyrB chains organized as two trimers (C3), and six regulatory PyrI chains organized as three dimers (R2).

It catalyses the reaction carbamoyl phosphate + L-aspartate = N-carbamoyl-L-aspartate + phosphate + H(+). It participates in pyrimidine metabolism; UMP biosynthesis via de novo pathway; (S)-dihydroorotate from bicarbonate: step 2/3. In terms of biological role, catalyzes the condensation of carbamoyl phosphate and aspartate to form carbamoyl aspartate and inorganic phosphate, the committed step in the de novo pyrimidine nucleotide biosynthesis pathway. In Anaplasma marginale (strain St. Maries), this protein is Aspartate carbamoyltransferase catalytic subunit.